Here is a 509-residue protein sequence, read N- to C-terminus: Coiled-coil domain-containing protein 181 (509 aa).

Disordered regions lie at residues 1–122 and 237–369; these read MDED…EDEE and FLPP…EKKK. Composition is skewed to basic and acidic residues over residues 22–33 and 41–56; these read DLEWLINDKEKS and ACKK…KENE. Residues 60 to 69 are compositionally biased toward polar residues; that stretch reads ELGQQLSDPD. 2 stretches are compositionally biased toward basic and acidic residues: residues 70–82 and 266–275; these read NSPK…RRND and IKKEESEAKG. Polar residues predominate over residues 319-333; that stretch reads RIQSAGVSPVTSTYC. Coiled coils occupy residues 335–377 and 418–488; these read SPRQ…VFKA and LKKK…RSKQ. Positions 337-369 are enriched in basic and acidic residues; that stretch reads RQKELQKQLERKREKLKREEEQRKLEEENEKKK.

Belongs to the CCDC181 family. In terms of assembly, homodimer. Interacts with HOOK1. Interacts with HOOK2. Interacts with HOOK3. In terms of tissue distribution, predominantly expressed in testis. Expressed at lower level in brain, eye, trachea and lung. Barely expressed in tongue, heart, liver, kidney, spleen and muscle. Present at high level in elongating spermatids, whereas lower levels are observed in round spermatids (at protein level).

It localises to the cytoplasm. Its subcellular location is the cytoskeleton. It is found in the cell projection. The protein resides in the cilium. The protein localises to the flagellum. Microtubule-binding protein that localizes to the microtubular manchette of elongating spermatids. The chain is Coiled-coil domain-containing protein 181 from Mus musculus (Mouse).